Consider the following 161-residue polypeptide: Lipoprotein signal peptidase (161 aa).

Transmembrane regions (helical) follow at residues Leu-8–Ala-28, Ile-40–Ser-60, Gln-67–Ile-87, and Ile-91–Phe-111. Catalysis depends on residues Asp-122 and Asp-140. Residues Phe-136–Phe-156 form a helical membrane-spanning segment.

The protein belongs to the peptidase A8 family.

The protein localises to the cell inner membrane. It catalyses the reaction Release of signal peptides from bacterial membrane prolipoproteins. Hydrolyzes -Xaa-Yaa-Zaa-|-(S,diacylglyceryl)Cys-, in which Xaa is hydrophobic (preferably Leu), and Yaa (Ala or Ser) and Zaa (Gly or Ala) have small, neutral side chains.. It functions in the pathway protein modification; lipoprotein biosynthesis (signal peptide cleavage). Its function is as follows. This protein specifically catalyzes the removal of signal peptides from prolipoproteins. In Francisella tularensis subsp. novicida (strain U112), this protein is Lipoprotein signal peptidase.